Consider the following 571-residue polypeptide: Proline--tRNA ligase (571 aa).

It belongs to the class-II aminoacyl-tRNA synthetase family. ProS type 1 subfamily. In terms of assembly, homodimer.

It localises to the cytoplasm. It catalyses the reaction tRNA(Pro) + L-proline + ATP = L-prolyl-tRNA(Pro) + AMP + diphosphate. Functionally, catalyzes the attachment of proline to tRNA(Pro) in a two-step reaction: proline is first activated by ATP to form Pro-AMP and then transferred to the acceptor end of tRNA(Pro). As ProRS can inadvertently accommodate and process non-cognate amino acids such as alanine and cysteine, to avoid such errors it has two additional distinct editing activities against alanine. One activity is designated as 'pretransfer' editing and involves the tRNA(Pro)-independent hydrolysis of activated Ala-AMP. The other activity is designated 'posttransfer' editing and involves deacylation of mischarged Ala-tRNA(Pro). The misacylated Cys-tRNA(Pro) is not edited by ProRS. The protein is Proline--tRNA ligase of Actinobacillus pleuropneumoniae serotype 3 (strain JL03).